The primary structure comprises 164 residues: Cytochrome c-type biogenesis protein CcmE (164 aa).

Residues 1 to 8 lie on the Cytoplasmic side of the membrane; it reads MNPRRKQR. The chain crosses the membrane as a helical; Signal-anchor for type II membrane protein span at residues 9–29; that stretch reads LAVVGIIGFLIVSAVGLMLYA. The Periplasmic portion of the chain corresponds to 30–164; that stretch reads LNDSIDLFYT…YESSNGAGSK (135 aa). Heme is bound by residues His-128 and Tyr-132. The segment at 142-164 is disordered; sequence KGIKHVKPENMPTYESSNGAGSK. The segment covering 154–164 has biased composition (polar residues); the sequence is TYESSNGAGSK.

Belongs to the CcmE/CycJ family.

Its subcellular location is the cell inner membrane. In terms of biological role, heme chaperone required for the biogenesis of c-type cytochromes. Transiently binds heme delivered by CcmC and transfers the heme to apo-cytochromes in a process facilitated by CcmF and CcmH. This chain is Cytochrome c-type biogenesis protein CcmE, found in Alteromonas mediterranea (strain DSM 17117 / CIP 110805 / LMG 28347 / Deep ecotype).